The primary structure comprises 555 residues: Glutamate--tRNA ligase (555 aa).

A 'HIGH' region motif is present at residues 100 to 110 (PNPSGPLHIGH).

This sequence belongs to the class-I aminoacyl-tRNA synthetase family. Glutamate--tRNA ligase type 2 subfamily.

The protein resides in the cytoplasm. The enzyme catalyses tRNA(Glu) + L-glutamate + ATP = L-glutamyl-tRNA(Glu) + AMP + diphosphate. Catalyzes the attachment of glutamate to tRNA(Glu) in a two-step reaction: glutamate is first activated by ATP to form Glu-AMP and then transferred to the acceptor end of tRNA(Glu). This Methanococcus maripaludis (strain C7 / ATCC BAA-1331) protein is Glutamate--tRNA ligase.